Consider the following 829-residue polypeptide: Ectonucleotide pyrophosphatase/phosphodiesterase C27A7.1 (829 aa).

A helical; Signal-anchor for type II membrane protein transmembrane segment spans residues 54 to 74 (VIGIAVLLLAMVVIVVIVLLL). T224 functions as the Nucleophile in the catalytic mechanism. 8 N-linked (GlcNAc...) asparagine glycosylation sites follow: N296, N424, N514, N542, N582, N649, N733, and N748. C439 and C782 are oxidised to a cystine.

The protein belongs to the nucleotide pyrophosphatase/phosphodiesterase family.

The protein resides in the membrane. Functionally, probable phosphodiesterase. This Caenorhabditis elegans protein is Ectonucleotide pyrophosphatase/phosphodiesterase C27A7.1.